The following is a 444-amino-acid chain: Type VI secretion system baseplate component TssK1 (444 aa).

In terms of assembly, forms transient higher-order structures that correlated with dynamics of sheath component TssB1. Interacts with TssA1.

Its function is as follows. Core component of the H1 type VI (H1-T6SS) secretion system that plays a role in the release of toxins targeting both eukaryotic and prokaryotic species. Functions as a spatio-temporal marker for assembly of contractile apparatus made of TssB1 and TssC1. This role in assembly depends on TssM1. This Pseudomonas aeruginosa (strain ATCC 15692 / DSM 22644 / CIP 104116 / JCM 14847 / LMG 12228 / 1C / PRS 101 / PAO1) protein is Type VI secretion system baseplate component TssK1.